A 102-amino-acid chain; its full sequence is MAEQKMRIKLKGYDHAIIDQSILKIIEAAEGTGAKVRGPIPLPTDKQVITILRAVHKYKDSREQFEMRTHKRLLEILNPTPTTMDVLKRVQLPSGVDIEIKL.

The protein belongs to the universal ribosomal protein uS10 family. Part of the 30S ribosomal subunit.

In terms of biological role, involved in the binding of tRNA to the ribosomes. This Mesoplasma florum (strain ATCC 33453 / NBRC 100688 / NCTC 11704 / L1) (Acholeplasma florum) protein is Small ribosomal subunit protein uS10.